Reading from the N-terminus, the 269-residue chain is Hydroxyethylthiazole kinase (269 aa).

Met-45 is a substrate binding site. Residues Arg-121 and Thr-167 each contribute to the ATP site. Residue Gly-194 coordinates substrate.

The protein belongs to the Thz kinase family. Mg(2+) is required as a cofactor.

The enzyme catalyses 5-(2-hydroxyethyl)-4-methylthiazole + ATP = 4-methyl-5-(2-phosphooxyethyl)-thiazole + ADP + H(+). It functions in the pathway cofactor biosynthesis; thiamine diphosphate biosynthesis; 4-methyl-5-(2-phosphoethyl)-thiazole from 5-(2-hydroxyethyl)-4-methylthiazole: step 1/1. In terms of biological role, catalyzes the phosphorylation of the hydroxyl group of 4-methyl-5-beta-hydroxyethylthiazole (THZ). This is Hydroxyethylthiazole kinase from Bacillus cereus (strain ATCC 14579 / DSM 31 / CCUG 7414 / JCM 2152 / NBRC 15305 / NCIMB 9373 / NCTC 2599 / NRRL B-3711).